A 106-amino-acid polypeptide reads, in one-letter code: BLOC-1-related complex subunit 7 (106 aa).

This sequence belongs to the BORCS7 family. Component of the BLOC-one-related complex (BORC) which is composed of BLOC1S1, BLOC1S2, BORCS5, BORCS6, BORCS7, BORCS8, KXD1 and SNAPIN.

The protein localises to the lysosome membrane. As part of the BORC complex may play a role in lysosomes movement and localization at the cell periphery. Associated with the cytosolic face of lysosomes, the BORC complex may recruit ARL8B and couple lysosomes to microtubule plus-end-directed kinesin motor. The chain is BLOC-1-related complex subunit 7 from Homo sapiens (Human).